The primary structure comprises 2515 residues: Zinc finger FYVE domain-containing protein 26 (2515 aa).

Disordered regions lie at residues 520 to 540, 586 to 634, 672 to 696, and 718 to 800; these read GPSD…SSPG, PHLP…EPHG, SSRG…DGLQ, and SIQG…SSLI. Over residues 623-634 the composition is skewed to basic and acidic residues; the sequence is PEPKDSSPEPHG. A compositionally biased stretch (basic residues) spans 738-748; it reads PSLRRGRRTRK. Over residues 749 to 758 the composition is skewed to basic and acidic residues; sequence SRADDQDKGS. Over residues 759–783 the composition is skewed to low complexity; that stretch reads RSSLENTSSELSTSTSEGSLSAASG. Serine 774 carries the phosphoserine modification. Positions 842–869 form a coiled coil; the sequence is MFMERYQEVIQELAQVEHKIENQNSDGG. The disordered stretch occupies residues 1253–1273; the sequence is TENPTLERKPPSSPRDSSPPA. Phosphoserine is present on residues serine 1718, serine 1740, serine 1756, and serine 1758. Residues 1740–1760 form a disordered region; it reads SAEFSSATAPGVSTVHSPSVR. An FYVE-type zinc finger spans residues 1788-1848; the sequence is DESESVCMVC…VCDQCYSYFN (61 aa). Positions 1794, 1797, 1811, 1814, 1819, 1822, 1840, and 1843 each coordinate Zn(2+).

It belongs to the ZFYVE26 family. As to quaternary structure, interacts with AP5Z1, AP5B1, AP5S1 and SPG11. Interacts with TTC19 and KIF13A.

It is found in the cytoplasm. The protein resides in the cytoskeleton. It localises to the microtubule organizing center. The protein localises to the centrosome. Its subcellular location is the midbody. Its function is as follows. Phosphatidylinositol 3-phosphate-binding protein required for the abscission step in cytokinesis: recruited to the midbody during cytokinesis and acts as a regulator of abscission. May also be required for efficient homologous recombination DNA double-strand break repair. The protein is Zinc finger FYVE domain-containing protein 26 (ZFYVE26) of Bos taurus (Bovine).